The following is an 827-amino-acid chain: Glycerol-3-phosphate acyltransferase (827 aa).

The HXXXXD motif motif lies at C325–M330.

It belongs to the GPAT/DAPAT family.

It localises to the cell inner membrane. The enzyme catalyses sn-glycerol 3-phosphate + an acyl-CoA = a 1-acyl-sn-glycero-3-phosphate + CoA. It participates in phospholipid metabolism; CDP-diacylglycerol biosynthesis; CDP-diacylglycerol from sn-glycerol 3-phosphate: step 1/3. The sequence is that of Glycerol-3-phosphate acyltransferase from Shigella sonnei (strain Ss046).